Consider the following 413-residue polypeptide: Probable inactive allantoicase (413 aa).

The protein belongs to the allantoicase family.

The function of this enzyme is unclear as allantoicase activity is not known to exist in mammals. The polypeptide is Probable inactive allantoicase (Rattus norvegicus (Rat)).